A 248-amino-acid polypeptide reads, in one-letter code: Probable transcriptional regulatory protein RPB_4273 (248 aa).

The interval 1-22 (MAGHSQFKNIMHRKGKQDAQRS) is disordered.

Belongs to the TACO1 family.

The protein resides in the cytoplasm. This chain is Probable transcriptional regulatory protein RPB_4273, found in Rhodopseudomonas palustris (strain HaA2).